We begin with the raw amino-acid sequence, 1549 residues long: FERM and PDZ domain-containing protein 1 (1549 aa).

One can recognise a PDZ domain in the interval 57-135 (TVTLDKDVLL…ALSITVVRCT (79 aa)). The FERM domain maps to 181–496 (NVLKVYLENG…GYYRLFVDPA (316 aa)). 7 disordered regions span residues 554-618 (AREE…DDLD), 717-738 (SHLS…PPQW), 775-834 (YDAA…YAKS), 913-1046 (STNP…RSEI), 1097-1174 (SLDS…EAQE), 1231-1257 (LSPC…DDSP), and 1321-1347 (PETE…AGSQ). The span at 717–730 (SHLSDSGSESTASR) shows a compositional bias: polar residues. The tract at residues 924 to 931 (EPETMETK) is important for interaction with GPSM2. Polar residues predominate over residues 950-961 (PSNTENPVTTDG). The span at 962-980 (SSASIPHSPHHSNPGSSSP) shows a compositional bias: low complexity. Basic and acidic residues predominate over residues 1117 to 1130 (SGKDLGDSKGDRLD).

In terms of assembly, interacts with GPSM1. Interacts with GPSM2.

The protein resides in the cytoplasm. It is found in the cytosol. It localises to the cell membrane. In terms of biological role, stabilizes membrane-bound GPSM1, and thereby promotes its interaction with GNAI1. In Mus musculus (Mouse), this protein is FERM and PDZ domain-containing protein 1 (Frmpd1).